The sequence spans 1058 residues: Probable plasma membrane ATPase (1058 aa).

The segment covering 1-29 has biased composition (polar residues); it reads MDNNQIPKNSPESSAINSAESSPKSNVSS. A disordered region spans residues 1–123; it reads MDNNQIPKNS…SSSGKKEEDY (123 aa). Over 1 to 212 the chain is Cytoplasmic; it reads MDNNQIPKNS…DVKRYPILEF (212 aa). The segment covering 31–40 has biased composition (basic and acidic residues); the sequence is VLHENHHKEQ. Low complexity predominate over residues 41 to 66; it reads QQLQQQLQQEQQQQQLPTTPQSEPTQ. Polar residues predominate over residues 96-111; that stretch reads SLKTISGYPSSKNTEA. The chain crosses the membrane as a helical span at residues 213–232; it reads LYFMWNPLSWTMEVAAIVSI. Topologically, residues 233 to 237 are extracellular; it reads ALLDW. Residues 238–258 form a helical membrane-spanning segment; that stretch reads VDFILICALLLLNATIGFIEE. The Cytoplasmic portion of the chain corresponds to 259–387; that stretch reads NTAGNAVEAL…GHLQVILRNI (129 aa). A helical transmembrane segment spans residues 388 to 407; it reads GLFCISFIAIWVLVELLVDF. At 408–425 the chain is on the extracellular side; sequence LGYDGYCHGVGGGRCLPL. A helical membrane pass occupies residues 426–447; it reads NNALVLLVGGIPIAMPTVLSVT. Residues 448-783 lie on the Cytoplasmic side of the membrane; it reads MAIGATQLSK…SSRKIFQRMR (336 aa). The 4-aspartylphosphate intermediate role is filled by D480. Positions 728 and 732 each coordinate Mg(2+). A helical transmembrane segment spans residues 784–805; it reads NYVIYSVAATVRICTTFGILTV. At 806-810 the chain is on the extracellular side; the sequence is AWNFK. A helical membrane pass occupies residues 811-833; it reads FPTIATVIIAILNDGTMLTISKD. At 834 to 849 the chain is on the cytoplasmic side; the sequence is RVRARNEPDQWNLFEV. Residues 850–870 traverse the membrane as a helical segment; the sequence is FTMALCYGFYLVGSTIVFFAI. The Extracellular segment spans residues 871-889; sequence IHDGTWFHDAINLRILTDN. Residues 890–910 form a helical membrane-spanning segment; it reads ELRGLIYLQVSISGLATIFVS. The Cytoplasmic portion of the chain corresponds to 911-922; sequence RSQGFSYFERPG. A helical membrane pass occupies residues 923 to 943; sequence NLVIFAFVMSQIVATFIGVYG. Residues 944-967 are Extracellular-facing; sequence FRGYPHDSFSDNPDYPVHGTNFQG. Residues 968 to 988 traverse the membrane as a helical segment; sequence CGWGWAVCAWIWCFLWYIPMD. At 989 to 1058 the chain is on the cytoplasmic side; it reads FIKLGVTYIL…HKSVVTDNKV (70 aa).

The protein belongs to the cation transport ATPase (P-type) (TC 3.A.3) family. Type IIIA subfamily.

The protein localises to the cell membrane. It catalyses the reaction ATP + H2O + H(+)(in) = ADP + phosphate + 2 H(+)(out). Acid pH levels increase its ATPase activity. Its function is as follows. P-type plasma membrane H+-ATPase (proton pump). The proton gradient it generates drives the active transport of nutrients by H(+) symport. The resulting external acidification and/or internal alkinization may mediate growth responses. In Dictyostelium discoideum (Social amoeba), this protein is Probable plasma membrane ATPase (patB).